The sequence spans 472 residues: Homeobox protein PKNOX2 (472 aa).

The disordered stretch occupies residues 1-62 (MMQHASPAPA…STPVPSAPID (62 aa)). Residues 26-38 (DSPQMTATAQPPS) show a composition bias toward polar residues. A compositionally biased stretch (low complexity) spans 46-56 (SAPSAAASTPV). Positions 96–179 (GSECITSASF…MHSDNLLRND (84 aa)) constitute an MEIS N-terminal domain. Positions 291–350 (KRGVLPKHATNIMRSWLFQHLMHPYPTEDEKRQIAAQTNLTLLQVNNWFINARRRILQPM) form a DNA-binding region, homeobox. Disordered stretches follow at residues 351–371 (LDASNPDPAPKAKKIKSQHRP), 386–405 (QQQGGAPGTNPDGSINLDNL), and 422–472 (MAAH…DSLE). Residues 361-371 (KAKKIKSQHRP) are compositionally biased toward basic residues. The span at 429-454 (LDGTEEEDEDEMEEEEEEELEEEVDE) shows a compositional bias: acidic residues.

The protein belongs to the TALE/MEIS homeobox family.

The protein resides in the nucleus. The sequence is that of Homeobox protein PKNOX2 (PKNOX2) from Homo sapiens (Human).